The chain runs to 317 residues: Lipopolysaccharide heptosyltransferase 1 (317 aa).

ADP-L-glycero-beta-D-manno-heptose-binding residues include Thr-187, Thr-188, Lys-192, Glu-222, Met-242, Asp-261, Thr-262, Gly-263, and His-266.

It belongs to the glycosyltransferase 9 family.

The protein resides in the cell inner membrane. It carries out the reaction an alpha-Kdo-(2-&gt;4)-alpha-Kdo-(2-&gt;6)-lipid A + ADP-L-glycero-beta-D-manno-heptose = an L-alpha-D-Hep-(1-&gt;5)-[alpha-Kdo-(2-&gt;4)]-alpha-Kdo-(2-&gt;6)-lipid A + ADP + H(+). Its pathway is bacterial outer membrane biogenesis; LPS core biosynthesis. Its function is as follows. Glycosyltransferase involved in the biosynthesis of the core oligosaccharide region of lipopolysaccharide (LPS). Catalyzes the addition of the first heptose unit to one 3-deoxy-D-manno-octulosonic acid (Kdo) residue of the Kdo2-lipid A module. This chain is Lipopolysaccharide heptosyltransferase 1, found in Salmonella typhimurium (strain LT2 / SGSC1412 / ATCC 700720).